The primary structure comprises 415 residues: U-box domain-containing protein 29 (415 aa).

In terms of domain architecture, U-box spans 11–85 (TVPSFFKCPI…NIWSDSIGRR (75 aa)). 2 ARM repeats span residues 221–263 (KSKL…TISK) and 265–307 (KRVR…TLSS).

As to quaternary structure, binds to SD129 and SD25.

It carries out the reaction S-ubiquitinyl-[E2 ubiquitin-conjugating enzyme]-L-cysteine + [acceptor protein]-L-lysine = [E2 ubiquitin-conjugating enzyme]-L-cysteine + N(6)-ubiquitinyl-[acceptor protein]-L-lysine.. It participates in protein modification; protein ubiquitination. Functions as an E3 ubiquitin ligase. The chain is U-box domain-containing protein 29 (PUB29) from Arabidopsis thaliana (Mouse-ear cress).